The sequence spans 420 residues: Gamma-glutamyl phosphate reductase (420 aa).

Belongs to the gamma-glutamyl phosphate reductase family.

It is found in the cytoplasm. It carries out the reaction L-glutamate 5-semialdehyde + phosphate + NADP(+) = L-glutamyl 5-phosphate + NADPH + H(+). The protein operates within amino-acid biosynthesis; L-proline biosynthesis; L-glutamate 5-semialdehyde from L-glutamate: step 2/2. In terms of biological role, catalyzes the NADPH-dependent reduction of L-glutamate 5-phosphate into L-glutamate 5-semialdehyde and phosphate. The product spontaneously undergoes cyclization to form 1-pyrroline-5-carboxylate. The chain is Gamma-glutamyl phosphate reductase from Streptococcus pneumoniae (strain Hungary19A-6).